Consider the following 100-residue polypeptide: Small ribosomal subunit protein uS14c (100 aa).

It belongs to the universal ribosomal protein uS14 family. In terms of assembly, part of the 30S ribosomal subunit.

Its subcellular location is the plastid. It localises to the chloroplast. Its function is as follows. Binds 16S rRNA, required for the assembly of 30S particles. This chain is Small ribosomal subunit protein uS14c, found in Calycanthus floridus var. glaucus (Eastern sweetshrub).